Consider the following 236-residue polypeptide: MQPITQIPLTFDTVVNLLGSASGIGWILNYILMTYYSFRDKTYSMSMLPLCCNIAWEFVYGILCPSSTFVVRPVILSWLVLNCLVVYAAIKYSPNEWAHAPLVQRHLPLLFTVGIAACTGFHIALIRKFDPATAFLWSARSCQVLLSIGGLFQLLCRSSTKGGSYVLWLSRFLGSICGVLKMTLMWKYGESRFPWLDDPLTAYCIALWIISDVLYGVVFYSLRSKELAGAGKAKAI.

7 helical membrane-spanning segments follow: residues 13–33, 45–65, 70–90, 106–126, 135–155, 166–186, and 200–220; these read TVVN…YILM, MSML…ILCP, VVRP…YAAI, HLPL…IALI, FLWS…FQLL, VLWL…TLMW, and LTAY…VVFY.

The protein belongs to the paxB family.

The protein resides in the membrane. It functions in the pathway secondary metabolite biosynthesis; terpenoid biosynthesis. Functionally, terpene cyclase; part of the gene cluster that mediates the biosynthesis of anditomin, a fungal meroterpenoid. The first step of the pathway is the synthesis of 3,5-dimethylorsellinic acid (DMOA) by the polyketide synthase andM. DMOA is then converted to the phthalide compound 5,7-dihydroxy-4,6-dimethylphthalide (DHDMP) by the cytochrome P450 monooxygenase andK, which is further prenylated by the prenyltransferase andD to yield farnesyl-DHDMP. Further epoxidation by the FAD-dependent monooxygenase andE leads to epoxyfarnesyl-DHDMP. The next step involves the terpene cyclase andB that converts epoxyfarnesyl-DHDMP into preandiloid A through opening of the epoxide ring followed by the cyclization of the farnesyl moiety. Preandiloid A is in turn oxidized at the C-3 hydroxyl group to yield preandiloid B by the dehydrogenase andC. The dioxygenase andA is solely responsible for the dehydrogenation of preandiloid B leading to the enone preandiloid C, as well as for the intriguing structural rearrangement to generate the bicyclo[2.2.2]octane core, transforming preandiloid C into andiconin. FAD-binding monooxygenase andJ then produces andilesin D which is reduced by dehydrogenase andI to yield andilesin A. Action of acetyltransferase andG followed by a spontaneous acetate elimination leads then to andilesin B, which is in turn substrate of the short chain dehydrogenase andH to yield andilesin C. Finally, the dioxygenase andF catalyzes the transformation of andilesin C to anditomin. The sequence is that of Terpene cyclase andB from Emericella variicolor (Aspergillus stellatus).